Consider the following 1227-residue polypeptide: Pesticidal crystal protein Cry1Be (1227 aa).

It belongs to the delta endotoxin family.

Its function is as follows. Promotes colloidosmotic lysis by binding to the midgut epithelial cells of many lepidopteran larvae. In Bacillus thuringiensis, this protein is Pesticidal crystal protein Cry1Be (cry1Be).